The sequence spans 429 residues: Transcriptional coactivator AacuS (429 aa).

Positions 80 to 144 (MASQTQLLAC…GFLQEPELGH (65 aa)) constitute an HTH iclR-type domain. The H-T-H motif DNA-binding region spans 110–129 (IKDVAELIGVPENHICRIVR).

It is found in the nucleus. In terms of biological role, transcriptional coactivator; part of the gene cluster that mediates the biosynthesis of the tetrahydroxanthone dimer secalonic acid D. In Aspergillus aculeatus (strain ATCC 16872 / CBS 172.66 / WB 5094), this protein is Transcriptional coactivator AacuS.